A 291-amino-acid polypeptide reads, in one-letter code: Flap endonuclease (291 aa).

The segment at 82–116 is helical arch; sequence YKGNRDEKYAQRTEEEKALDEQFFEYLKDAFELCK. K83 serves as a coordination point for DNA. The Mg(2+) site is built by D130, D153, D155, and D201. Residues 188–224 form a DNA-binding; H3TH region; that stretch reads DVEQFISLKAIMGDLGDNIRGVEGIGAKRGYNIIREF. The region spanning 190–263 is the 5'-3' exonuclease domain; it reads EQFISLKAIM…FRNLILVDLP (74 aa). V209 and I212 together coordinate K(+).

Mg(2+) serves as cofactor. K(+) is required as a cofactor.

The catalysed reaction is Exonucleolytic cleavage in the 5'- to 3'-direction to yield nucleoside 5'-phosphates.. With respect to regulation, inhibited by p-hydroxymercuribenzoate (PHMB). Functionally, catalyzes both the 5'-exonucleolytic and structure-specific endonucleolytic hydrolysis of DNA branched nucleic acid molecules and probably plays a role in viral genome replication. Active on flap (branched duplex DNA containing a free single-stranded 5'-end), 5'overhangs and pseudo-Y structures. The substrates require a free, single-stranded 5' end, with endonucleolytic hydrolysis occurring at the junction of double- and single-stranded DNA. This function may be used for example to trim such branched molecules generated by Okazaki fragments synthesis during replication. The sequence is that of Flap endonuclease (D15) from Escherichia phage T5 (Enterobacteria phage T5).